The primary structure comprises 434 residues: N-acylneuraminate cytidylyltransferase (434 aa).

N-acetylmethionine is present on M1. The tract at residues 1-42 is disordered; that stretch reads MDSVEKGAATSVSNPRGRPSRGRPPKLQRNSRGGQGRGVEKP. A BC1 motif motif is present at residues 15–31; it reads PRGRPSRGRPPKLQRNS. 2 positions are modified to omega-N-methylarginine: R37 and R52. Substrate contacts are provided by R52, N62, R111, S120, S122, and Q143. A BC2 motif motif is present at residues 200–206; it reads KRPRRQD. Residue R201 is part of the active site. Residues 269–276 carry the BC3 motif motif; sequence KEKLKEIK.

The protein belongs to the CMP-NeuNAc synthase family. As to quaternary structure, homotetramer; the active enzyme is formed by a dimer of dimers. In terms of tissue distribution, ubiquitously expressed. Expressed in pancreas, kidney, liver, skeletal muscle, lung, placenta, brain, heart, colon, PBL, small intestine, ovary, testis, prostate, thymus and spleen.

The protein localises to the nucleus. The catalysed reaction is an N-acylneuraminate + CTP = a CMP-N-acyl-beta-neuraminate + diphosphate. It participates in amino-sugar metabolism; N-acetylneuraminate metabolism. In terms of biological role, catalyzes the activation of N-acetylneuraminic acid (NeuNAc) to cytidine 5'-monophosphate N-acetylneuraminic acid (CMP-NeuNAc), a substrate required for the addition of sialic acid. Has some activity toward NeuNAc, N-glycolylneuraminic acid (Neu5Gc) or 2-keto-3-deoxy-D-glycero-D-galacto-nononic acid (KDN). The chain is N-acylneuraminate cytidylyltransferase (CMAS) from Homo sapiens (Human).